We begin with the raw amino-acid sequence, 356 residues long: 3-dehydroquinate synthase (356 aa).

Residues Glu-71–Lys-76, Gly-105–Asp-109, Thr-129–Ser-130, Lys-142, and Lys-151 contribute to the NAD(+) site. Zn(2+) is bound by residues Glu-184, His-247, and His-264.

The protein belongs to the sugar phosphate cyclases superfamily. Dehydroquinate synthase family. Co(2+) is required as a cofactor. Zn(2+) serves as cofactor. Requires NAD(+) as cofactor.

It is found in the cytoplasm. It carries out the reaction 7-phospho-2-dehydro-3-deoxy-D-arabino-heptonate = 3-dehydroquinate + phosphate. It functions in the pathway metabolic intermediate biosynthesis; chorismate biosynthesis; chorismate from D-erythrose 4-phosphate and phosphoenolpyruvate: step 2/7. In terms of biological role, catalyzes the conversion of 3-deoxy-D-arabino-heptulosonate 7-phosphate (DAHP) to dehydroquinate (DHQ). In Lactococcus lactis subsp. cremoris (strain SK11), this protein is 3-dehydroquinate synthase.